The sequence spans 37 residues: Photosystem II reaction center protein Y (37 aa).

Residues 4–22 (AIVVFAPIIAAVAWVVFNI) form a helical membrane-spanning segment.

It belongs to the PsbY family. As to quaternary structure, PSII is composed of 1 copy each of membrane proteins PsbA, PsbB, PsbC, PsbD, PsbE, PsbF, PsbH, PsbI, PsbJ, PsbK, PsbL, PsbM, PsbT, PsbX, PsbY, Psb30/Ycf12, peripheral proteins PsbO, CyanoQ (PsbQ), PsbU, PsbV and a large number of cofactors. It forms dimeric complexes.

Its subcellular location is the cellular thylakoid membrane. In terms of biological role, loosely associated component of the core of photosystem II (PSII), it is not always seen in crystals. PSII is a light-driven water plastoquinone oxidoreductase, using light energy to abstract electrons from H(2)O, generating a proton gradient subsequently used for ATP formation. The sequence is that of Photosystem II reaction center protein Y from Prochlorococcus marinus (strain MIT 9312).